Consider the following 132-residue polypeptide: Small ribosomal subunit protein uS9 (132 aa).

This sequence belongs to the universal ribosomal protein uS9 family.

This is Small ribosomal subunit protein uS9 from Leptospira borgpetersenii serovar Hardjo-bovis (strain JB197).